A 369-amino-acid polypeptide reads, in one-letter code: Delta(6)-protoilludene synthase STEHIDRAFT_73029 (369 aa).

The Mg(2+) site is built by aspartate 107, asparagine 243, serine 247, and glutamate 251. Residues 107-111 (DEYSD) carry the D(D/E)XX(D/E) motif motif. The NSE motif motif lies at 243–251 (NDIVSYNLE). The (2E,6E)-farnesyl diphosphate site is built by arginine 333 and tyrosine 334.

It belongs to the terpene synthase family. Mg(2+) is required as a cofactor. It depends on Mn(2+) as a cofactor. The cofactor is Ca(2+). Ni(2+) serves as cofactor. Requires Co(2+) as cofactor.

It carries out the reaction (2E,6E)-farnesyl diphosphate = Delta(6)-protoilludene + diphosphate. The catalysed reaction is (2E,6E)-farnesyl diphosphate = alpha-selinene + diphosphate. With respect to regulation, ca(2+) switches the cyclization mechanism of delta(6)-protoilludene synthase from 1,11 to 1,10 cyclization which leads to the production of beta-elemene. Terpene cyclase that catalyzes the cyclization of farnesyl diphosphate (FPP) to delta(6)-protoilludene. In presence of Ca(2+), a significant switch from 1,11 to a dual 1,11/1,10 cyclization occurs, producing beta-elemene as the major product, with lower levels of delta(6)-protoilludene and (E)-beta-caryophyllene, and traces of beta-selinene and alpha-selinene. In Stereum hirsutum (strain FP-91666) (White-rot fungus), this protein is Delta(6)-protoilludene synthase STEHIDRAFT_73029.